We begin with the raw amino-acid sequence, 156 residues long: Small ribosomal subunit protein uS7 (156 aa).

Belongs to the universal ribosomal protein uS7 family. Part of the 30S ribosomal subunit. Contacts proteins S9 and S11.

One of the primary rRNA binding proteins, it binds directly to 16S rRNA where it nucleates assembly of the head domain of the 30S subunit. Is located at the subunit interface close to the decoding center, probably blocks exit of the E-site tRNA. This is Small ribosomal subunit protein uS7 from Psychromonas ingrahamii (strain DSM 17664 / CCUG 51855 / 37).